The primary structure comprises 335 residues: Glyceraldehyde-3-phosphate dehydrogenase (335 aa).

Residues 11 to 12 (TI) and G110 contribute to the NAD(+) site. 139 to 141 (SCN) serves as a coordination point for D-glyceraldehyde 3-phosphate. The active-site Nucleophile is C140. R168 serves as a coordination point for NAD(+). 194-195 (HG) provides a ligand contact to D-glyceraldehyde 3-phosphate. Position 301 (Q301) interacts with NAD(+).

This sequence belongs to the glyceraldehyde-3-phosphate dehydrogenase family. In terms of assembly, homotetramer.

It is found in the cytoplasm. It catalyses the reaction D-glyceraldehyde 3-phosphate + phosphate + NADP(+) = (2R)-3-phospho-glyceroyl phosphate + NADPH + H(+). It carries out the reaction D-glyceraldehyde 3-phosphate + phosphate + NAD(+) = (2R)-3-phospho-glyceroyl phosphate + NADH + H(+). It functions in the pathway carbohydrate degradation; glycolysis; pyruvate from D-glyceraldehyde 3-phosphate: step 1/5. The chain is Glyceraldehyde-3-phosphate dehydrogenase from Halobacterium salinarum (strain ATCC 29341 / DSM 671 / R1).